The sequence spans 168 residues: Small ribosomal subunit protein uS5 (168 aa).

Positions 13-76 (LQEKLIAVNR…EKARRNMVTV (64 aa)) constitute an S5 DRBM domain.

This sequence belongs to the universal ribosomal protein uS5 family. In terms of assembly, part of the 30S ribosomal subunit. Contacts proteins S4 and S8.

Functionally, with S4 and S12 plays an important role in translational accuracy. Located at the back of the 30S subunit body where it stabilizes the conformation of the head with respect to the body. This chain is Small ribosomal subunit protein uS5, found in Shewanella amazonensis (strain ATCC BAA-1098 / SB2B).